The chain runs to 99 residues: Large ribosomal subunit protein eL21 (99 aa).

Belongs to the eukaryotic ribosomal protein eL21 family.

The polypeptide is Large ribosomal subunit protein eL21 (Methanocella arvoryzae (strain DSM 22066 / NBRC 105507 / MRE50)).